Reading from the N-terminus, the 199-residue chain is MLLELSEEHKEHLAFLPQVDSSVVAEFGRIAVEFLRRGANPKIYEGAARKLNVSSDTVQHGVEGLTYLLTESSKLMISELDFQDSVFVLGFSEELNKLLLQLYLDNRKEIRMILSELAPSLPSYHNLEWRLDVQLASRSLRQQIKPAVTIKLHLNQNGDHNTKILQTDPATLLHLVQQLEQALEEMKTNHCRRVVRNIK.

The COMM domain maps to 123-190; sequence SYHNLEWRLD…QALEEMKTNH (68 aa).

Belongs to the COMM domain-containing protein 2 family. Component of the commander complex consisting of the CCC subcomplex and the retriever subcomplex. Component of the CCC (COMMD/CCDC22/CCDC93) subcomplex consisting of COMMD1, COMMD2, COMMD3, COMMD4, COMMD5, COMMD6, COMMD7, COMMD8, COMMD9, COMMD10, CCDC22 and CCDC93; within the complex forms a heterodimer with COMMD3. Interacts with RELA, RELB, NFKB1/p105, NFKB2/p100. Interacts with CCDC22, CCDC93, SCNN1B, CUL3, CUL4B, CUL5, CUL7.

The protein localises to the cytoplasm. Scaffold protein in the commander complex that is essential for endosomal recycling of transmembrane cargos; the commander complex is composed of the CCC subcomplex and the retriever subcomplex. May modulate activity of cullin-RING E3 ubiquitin ligase (CRL) complexes. May down-regulate activation of NF-kappa-B. This chain is COMM domain-containing protein 2 (COMMD2), found in Pongo abelii (Sumatran orangutan).